A 214-amino-acid polypeptide reads, in one-letter code: LexA repressor (214 aa).

Residues 28-48 constitute a DNA-binding region (H-T-H motif); that stretch reads IRDIQRELSISSTSVVAYNLR. Catalysis depends on for autocatalytic cleavage activity residues Ser-133 and Lys-172.

The protein belongs to the peptidase S24 family. As to quaternary structure, homodimer.

The catalysed reaction is Hydrolysis of Ala-|-Gly bond in repressor LexA.. In terms of biological role, represses a number of genes involved in the response to DNA damage (SOS response), including recA and lexA. In the presence of single-stranded DNA, RecA interacts with LexA causing an autocatalytic cleavage which disrupts the DNA-binding part of LexA, leading to derepression of the SOS regulon and eventually DNA repair. In Herpetosiphon aurantiacus (strain ATCC 23779 / DSM 785 / 114-95), this protein is LexA repressor.